The following is a 471-amino-acid chain: Serine/threonine-protein kinase AtPK2/AtPK19 (471 aa).

The disordered stretch occupies residues 1–21; it reads MVSSQCSVANKNQTGKPFQKH. The region spanning 140–395 is the Protein kinase domain; sequence FEVLKVVGQG…AEEIKKHKWF (256 aa). ATP is bound by residues 146–154 and Lys-169; that span reads VGQGAFGKV. The active-site Proton acceptor is the Asp-263. The interval 281–307 is activation loop; the sequence is DFGLAKEFEENTRSNSMCGTTEYMAPE. A Phosphoserine; by PDPK1 modification is found at Ser-296. In terms of domain architecture, AGC-kinase C-terminal spans 396 to 466; that stretch reads KAINWKKLEA…VRPPHSFLHR (71 aa). Position 455 is a phosphothreonine; by TOR (Thr-455).

The protein belongs to the protein kinase superfamily. AGC Ser/Thr protein kinase family. S6 kinase subfamily. Interacts with TAP46. Binds to MRF1. In terms of processing, undergoes serine-specific autophosphorylation. Phosphorylated at Thr-455 by TOR.

The catalysed reaction is L-seryl-[protein] + ATP = O-phospho-L-seryl-[protein] + ADP + H(+). The enzyme catalyses L-threonyl-[protein] + ATP = O-phospho-L-threonyl-[protein] + ADP + H(+). Its activity is regulated as follows. Activated by PDK1. Its function is as follows. Downstream effector of TOR signaling pathway. May be involved in adaptation of plant to cold or high-salt conditions. Mediates the phosphorylation of MRFs (e.g. MRF1). In Arabidopsis thaliana (Mouse-ear cress), this protein is Serine/threonine-protein kinase AtPK2/AtPK19 (ATPK2).